Reading from the N-terminus, the 290-residue chain is MDKLIKTISVSGAFRAYVLDCTETVRAAQERHHTLSSSTVALGRTLIANQILAANQKGDSKVTVKVIGDSSFGHIISVADTKGHVKGYIQNPGVDIKKTATGEVLVGPFMGQGHFVTITDYGTGNPYTSTTPLITGEIGEDLAYYLTESEQTPSAVGLNVLLDQEDKVKVAGGFMLQVLPEASDEEISRYEKRIQEMPAISSLLASENHIDALLAAIYGKEPYKRLAEEQLSFQCDCSRERFASALMSLPKADLLTMLNEDKGAEIVCQFCGTKYQFDQADLEVLINDKT.

Cystine bridges form between Cys235–Cys237 and Cys268–Cys271.

Belongs to the HSP33 family. Under oxidizing conditions two disulfide bonds are formed involving the reactive cysteines. Under reducing conditions zinc is bound to the reactive cysteines and the protein is inactive.

It is found in the cytoplasm. Its function is as follows. Redox regulated molecular chaperone. Protects both thermally unfolding and oxidatively damaged proteins from irreversible aggregation. Plays an important role in the bacterial defense system toward oxidative stress. The sequence is that of 33 kDa chaperonin from Streptococcus equi subsp. zooepidemicus (strain MGCS10565).